The sequence spans 206 residues: Guanylate kinase (206 aa).

Residues 6–184 (GILFILSGPS…AVDKVKTIIK (179 aa)) form the Guanylate kinase-like domain. 13–20 (GPSGVGKG) lines the ATP pocket.

It belongs to the guanylate kinase family.

The protein resides in the cytoplasm. The enzyme catalyses GMP + ATP = GDP + ADP. Functionally, essential for recycling GMP and indirectly, cGMP. In Oceanobacillus iheyensis (strain DSM 14371 / CIP 107618 / JCM 11309 / KCTC 3954 / HTE831), this protein is Guanylate kinase.